We begin with the raw amino-acid sequence, 3004 residues long: Guanylate cyclase beta (3004 aa).

At 1–66 the chain is on the cytoplasmic side; it reads MKETDKIKSE…FSLYNFIRRL (66 aa). A helical membrane pass occupies residues 67-87; that stretch reads ISLDAVIVYTLFMTVYIFSEI. The Extracellular portion of the chain corresponds to 88–94; the sequence is SQGITKK. A helical transmembrane segment spans residues 95–115; sequence YLFVDTAISLFLNIGILVVIE. Topologically, residues 116-300 are cytoplasmic; that stretch reads SLFELKLLKD…TFCIKMNNVV (185 aa). A helical transmembrane segment spans residues 301-321; sequence YYLIFMYILFVLLSIIIKAIF. Topologically, residues 322–334 are extracellular; it reads YRKGKLLENSNDT. N-linked (GlcNAc...) asparagine glycosylation is present at Asn-332. Residues 335-355 traverse the membrane as a helical segment; that stretch reads FFTVLEDFIGLYILVLPVMLY. Residues 356–991 are Cytoplasmic-facing; it reads SEKSLIYIIQ…GRLNRFSLCR (636 aa). A helical transmembrane segment spans residues 992 to 1012; the sequence is AFLWIIYLKVMIGSFYFFHNF. At 1013-1022 the chain is on the extracellular side; sequence DNFFSGSSIS. A helical transmembrane segment spans residues 1023–1043; the sequence is SILYSQTAFAIFHYSLIVAFA. At 1044–1072 the chain is on the cytoplasmic side; that stretch reads SYEIDIPYKFIRNFPYIYQLARRKYFLNN. The helical transmembrane segment at 1073–1093 threads the bilayer; the sequence is TIIFLNIVESIFSSFISYYIL. The Extracellular portion of the chain corresponds to 1094–1105; it reads RGNLFNLITHRK. The helical transmembrane segment at 1106-1126 threads the bilayer; it reads FTFHIFVLNFFLISEKILLFS. Residues 1127–1130 are Cytoplasmic-facing; the sequence is KTWH. A helical transmembrane segment spans residues 1131 to 1151; sequence IFFFIMTIIIVSILFIYINIY. Over 1152–1171 the chain is Extracellular; the sequence is TLVDCLITGKCEFSLFDPED. A helical membrane pass occupies residues 1172-1192; the sequence is SYFWISLLPILYINFIIDKFM. Residues 1193–1297 lie on the Cytoplasmic side of the membrane; that stretch reads KFVKNKIYPD…YEKRNKLKLR (105 aa). Residues 1298–1318 form a helical membrane-spanning segment; that stretch reads IIILLLFIIFLITFTIQIIIS. The Extracellular portion of the chain corresponds to 1319-1327; sequence KFIEKKLHS. Residues 1328–1348 form a helical membrane-spanning segment; it reads LSYLTVIYYIVAVLYLIKILI. At 1349–1353 the chain is on the cytoplasmic side; that stretch reads RNKTN. The chain crosses the membrane as a helical span at residues 1354-1374; that stretch reads YTYFYIIGKLLLVIGYLLEIS. At 1375-1394 the chain is on the extracellular side; the sequence is ENSVNNIINMLVTYSFTVCY. The chain crosses the membrane as a helical span at residues 1395 to 1415; that stretch reads IFFISFKILEGLVMCIIILSI. Residues 1416 to 1457 are Cytoplasmic-facing; the sequence is AIWVYYHKNNNLNAMCTDFCDNPYTSLDNLEYINISCICKQQ. Residues 1458-1478 form a helical membrane-spanning segment; that stretch reads IFTFLICTLSFTLICLFMKYY. Topologically, residues 1479 to 1500 are extracellular; that stretch reads EIYYLKKKFLTRYKQKVNLGKQ. A helical membrane pass occupies residues 1501–1521; it reads IEILHTMLPSFLVEYLLVSDP. Over 1522 to 2563 the chain is Cytoplasmic; sequence KADGIMVGKN…EIINIDLTKK (1042 aa). The 156-residue stretch at 1541–1696 folds into the Guanylate cyclase 1 domain; it reads SVIFCDIDDF…DTVNTASRMK (156 aa). Residues 2463 to 2476 show a composition bias toward polar residues; that stretch reads TMSNSKSGQTNITT. The interval 2463-2491 is disordered; the sequence is TMSNSKSGQTNITTDNKKSQIKKNGDVNK. Residues 2477-2488 show a composition bias toward basic and acidic residues; the sequence is DNKKSQIKKNGD. Residues 2564–2584 traverse the membrane as a helical segment; sequence LIIIFVISELILSLCNVIELS. Residues 2585–2594 lie on the Extracellular side of the membrane; that stretch reads YYENKETPND. The chain crosses the membrane as a helical span at residues 2595–2615; sequence FIVIIWLIRSIYLFTITFIWL. The Cytoplasmic segment spans residues 2616–2634; that stretch reads LLKTKLKEYKDNSSKMMWT. Residues 2635–2655 traverse the membrane as a helical segment; sequence TFILNIFLSSWGIIMIDLACI. Residues 2656–2667 are Extracellular-facing; that stretch reads HYSNLVGNSRER. Residues 2668-2688 form a helical membrane-spanning segment; that stretch reads SIFFMKDATELIISMQLIFVK. Over 2689–2695 the chain is Cytoplasmic; sequence NMLFKHK. A helical membrane pass occupies residues 2696-2716; the sequence is FFFFVFFFVFLMYSFFKLFVI. Over 2717–2722 the chain is Extracellular; that stretch reads HVCELR. A helical transmembrane segment spans residues 2723 to 2743; that stretch reads ICCSILLILSINILYFWYSEY. Residues 2744-3004 are Cytoplasmic-facing; that stretch reads LDRTQYIIKR…KLREQNKVKG (261 aa). Residues 2793–2927 form the Guanylate cyclase 2 domain; sequence AFLFADIVGF…LDVLIANHIE (135 aa). Residues Asp-2798, Ile-2799, and Asp-2842 each coordinate Mg(2+).

It in the N-terminal section; belongs to the cation transport ATPase (P-type) (TC 3.A.3) family. Type IV subfamily. The protein in the C-terminal section; belongs to the adenylyl cyclase class-4/guanylyl cyclase family. Mg(2+) is required as a cofactor. Requires Mn(2+) as cofactor.

The protein resides in the membrane. It carries out the reaction GTP = 3',5'-cyclic GMP + diphosphate. Catalyzes the synthesis of the second messenger cGMP from GTP. Probably by regulating cGMP production, required for ookinete gliding motility, which is necessary for the ookinete to traverse the midgut epithelium of the mosquito. The sequence is that of Guanylate cyclase beta from Plasmodium berghei (strain Anka).